Reading from the N-terminus, the 211-residue chain is 2,3-bisphosphoglycerate-dependent phosphoglycerate mutase (211 aa).

Residues 9–16, 22–23, arginine 61, 88–91, lysine 99, 115–116, and 159–160 contribute to the substrate site; these read RHGQSDWN, TG, ERDY, RR, and GN. Catalysis depends on histidine 10, which acts as the Tele-phosphohistidine intermediate. Residue glutamate 88 is the Proton donor/acceptor of the active site.

Belongs to the phosphoglycerate mutase family. BPG-dependent PGAM subfamily. As to quaternary structure, homodimer.

The catalysed reaction is (2R)-2-phosphoglycerate = (2R)-3-phosphoglycerate. It participates in carbohydrate degradation; glycolysis; pyruvate from D-glyceraldehyde 3-phosphate: step 3/5. Functionally, catalyzes the interconversion of 2-phosphoglycerate and 3-phosphoglycerate. The sequence is that of 2,3-bisphosphoglycerate-dependent phosphoglycerate mutase from Rhizobium rhizogenes (strain K84 / ATCC BAA-868) (Agrobacterium radiobacter).